The following is a 401-amino-acid chain: Glutamyl-tRNA reductase (401 aa).

Residues 49 to 52 (TCNR), S92, 97 to 99 (END), and Q103 each bind substrate. C50 (nucleophile) is an active-site residue. 171 to 176 (GNGKMA) contributes to the NADP(+) binding site.

It belongs to the glutamyl-tRNA reductase family. As to quaternary structure, homodimer.

It carries out the reaction (S)-4-amino-5-oxopentanoate + tRNA(Glu) + NADP(+) = L-glutamyl-tRNA(Glu) + NADPH + H(+). It functions in the pathway porphyrin-containing compound metabolism; protoporphyrin-IX biosynthesis; 5-aminolevulinate from L-glutamyl-tRNA(Glu): step 1/2. Functionally, catalyzes the NADPH-dependent reduction of glutamyl-tRNA(Glu) to glutamate 1-semialdehyde (GSA). This chain is Glutamyl-tRNA reductase, found in Picrophilus torridus (strain ATCC 700027 / DSM 9790 / JCM 10055 / NBRC 100828 / KAW 2/3).